The primary structure comprises 158 residues: Small ribosomal subunit protein uS9 (158 aa).

The segment covering 1–20 (MSETMQSLDQLSALKTTQPD) has biased composition (polar residues). The interval 1-29 (MSETMQSLDQLSALKTTQPDAPTYTKKVD) is disordered.

Belongs to the universal ribosomal protein uS9 family.

This chain is Small ribosomal subunit protein uS9, found in Rhodopseudomonas palustris (strain BisB5).